The primary structure comprises 337 residues: Trace amine-associated receptor 5 (337 aa).

Residues 1-34 (MRAVFIQGAEEHPAAFCYQVNGSCPRTVHTLGIQ) lie on the Extracellular side of the membrane. N-linked (GlcNAc...) asparagine glycosylation occurs at asparagine 21. 2 disulfide bridges follow: cysteine 24/cysteine 188 and cysteine 99/cysteine 192. A helical membrane pass occupies residues 35–55 (LVIYLACAAGMLIIVLGNLFV). At 56 to 70 (AFAVSYFKALHTPTN) the chain is on the cytoplasmic side. The chain crosses the membrane as a helical span at residues 71–91 (FLLLSLALADMFLGLLVLPLS). The Extracellular segment spans residues 92–109 (TIRSVESCWFFGDFLCRL). A helical transmembrane segment spans residues 110–130 (HTYLDPLFCLTSIFHLCFISI). Residues 131 to 154 (DRHCAICDPLLYPSKFTVRVALRY) are Cytoplasmic-facing. The helical transmembrane segment at 155 to 175 (ILAGWGVPAAYTSLFLYTDVV) threads the bilayer. An extracellular Loop 2 (ECL2) region spans residues 176-189 (ETRLSQWLEEMPCV). Residues 176 to 204 (ETRLSQWLEEMPCVGSCQLLLNKFWGWLN) lie on the Extracellular side of the membrane. The chain crosses the membrane as a helical span at residues 205 to 225 (FPLFFVPCLIMISLYVKIFVV). At 226–253 (ATRQAQQITTLSKNLAGAAKHDRKAAKT) the chain is on the cytoplasmic side. A helical transmembrane segment spans residues 254 to 274 (LGIAVGIYLLCWLPFTIDTMV). Topologically, residues 275–284 (DSLLHFITPP) are extracellular. Residues 285–307 (LVFDIFIWFAYFNSACNPIIYVF) form a helical membrane-spanning segment. Over 308–337 (SYQWFRKALKLTLSQKVFSPQTRTVDLYQE) the chain is Cytoplasmic.

This sequence belongs to the G-protein coupled receptor 1 family.

Its subcellular location is the cell membrane. Functionally, olfactory receptor specific for trimethylamine, a trace amine. Trimethylamine is a bacterial metabolite found in some animal odors. Trimethylamine-binding causes a conformation change that triggers signaling via G(s)-class of G alpha proteins (GNAL or GNAS). The sequence is that of Trace amine-associated receptor 5 (TAAR5) from Pan troglodytes (Chimpanzee).